The chain runs to 390 residues: Chorismate synthase 2 (390 aa).

Residues R39 and R45 each coordinate NADP(+). FMN-binding positions include 132-134, 253-254, G298, 313-317, and R339; these read RSS, NA, and KPIPT.

The protein belongs to the chorismate synthase family. As to quaternary structure, homotetramer. FMNH2 serves as cofactor.

It catalyses the reaction 5-O-(1-carboxyvinyl)-3-phosphoshikimate = chorismate + phosphate. Its pathway is metabolic intermediate biosynthesis; chorismate biosynthesis; chorismate from D-erythrose 4-phosphate and phosphoenolpyruvate: step 7/7. Catalyzes the anti-1,4-elimination of the C-3 phosphate and the C-6 proR hydrogen from 5-enolpyruvylshikimate-3-phosphate (EPSP) to yield chorismate, which is the branch point compound that serves as the starting substrate for the three terminal pathways of aromatic amino acid biosynthesis. This reaction introduces a second double bond into the aromatic ring system. This Bacillus cereus (strain ATCC 10987 / NRS 248) protein is Chorismate synthase 2.